The chain runs to 433 residues: 5-methylthioadenosine/S-adenosylhomocysteine deaminase (433 aa).

2 residues coordinate Zn(2+): histidine 67 and histidine 69. Substrate-binding residues include glutamate 96, arginine 148, and histidine 186. Histidine 213 is a binding site for Zn(2+). Substrate-binding residues include glutamate 216 and aspartate 301. Aspartate 301 provides a ligand contact to Zn(2+).

Belongs to the metallo-dependent hydrolases superfamily. MTA/SAH deaminase family. It depends on Zn(2+) as a cofactor.

It carries out the reaction S-adenosyl-L-homocysteine + H2O + H(+) = S-inosyl-L-homocysteine + NH4(+). It catalyses the reaction S-methyl-5'-thioadenosine + H2O + H(+) = S-methyl-5'-thioinosine + NH4(+). Its function is as follows. Catalyzes the deamination of 5-methylthioadenosine and S-adenosyl-L-homocysteine into 5-methylthioinosine and S-inosyl-L-homocysteine, respectively. Is also able to deaminate adenosine. The chain is 5-methylthioadenosine/S-adenosylhomocysteine deaminase from Desulforamulus reducens (strain ATCC BAA-1160 / DSM 100696 / MI-1) (Desulfotomaculum reducens).